Reading from the N-terminus, the 275-residue chain is MANYTAADVKRLRELTGSGMMDCKNALAETDGDFDKAVELLRIKGAKDVGKRAERTTAEGLVAAKDGVMIEINSETDFVAKNDEFQALANQIVTAAAAAKTADLDSLKALDLGDGRTADAALQELAAKIGEKLELRRVVSLDGPVATYLHKRASDLPPAVGVLVEYQGAGDAAAEAARAAAMQVAALKAKYVTRDEVPADIVENERRIAEQTAREEGKPEAALPKITEGRVNGFFKDVVLLEQPSVTDNKKTVKQQLDEAGVTVTRFARFEVGQA.

Residues 76–79 form an involved in Mg(2+) ion dislocation from EF-Tu region; the sequence is TDFV.

Belongs to the EF-Ts family.

The protein resides in the cytoplasm. Functionally, associates with the EF-Tu.GDP complex and induces the exchange of GDP to GTP. It remains bound to the aminoacyl-tRNA.EF-Tu.GTP complex up to the GTP hydrolysis stage on the ribosome. This Nocardia farcinica (strain IFM 10152) protein is Elongation factor Ts.